Here is a 362-residue protein sequence, read N- to C-terminus: Solute carrier family 25 member 3 (362 aa).

The N-terminal 49 residues, 1 to 49, are a transit peptide targeting the mitochondrion; sequence MYSSVVHLARANPFNAPHLQLVHDGLAGPRSDPAGPPGPPRRSRNLAAA. The Mitochondrial intermembrane portion of the chain corresponds to 50-63; sequence AVEEQYSCDYGSGR. 3 Solcar repeats span residues 63–147, 160–244, and 261–339; these read RFFI…FKVL, WRTS…TVEA, and EQLV…VKVY. Residues 64 to 86 traverse the membrane as a helical segment; sequence FFILCGLGGIISCGTTHTALVPL. Residues 87–121 are Mitochondrial matrix-facing; it reads DLVKCRMQVDPQKYKSIFNGFSVTLKEDGFRGLAK. The residue at position 99 (Lys-99) is an N6-acetyllysine. At Lys-112 the chain carries N6-methyllysine. Residues 122–141 traverse the membrane as a helical segment; sequence GWAPTFIGYSLQGLCKFGFY. Residues 142–161 are Mitochondrial intermembrane-facing; that stretch reads EVFKVLYSNMLGEENAYLWR. The helical transmembrane segment at 162–183 threads the bilayer; that stretch reads TSLYLAASASAEFFADIALAPM. Residues 184 to 218 lie on the Mitochondrial matrix side of the membrane; it reads EAAKVRIQTQPGYANTLRDAAPKMYKEEGLKAFYK. Position 196 is a phosphotyrosine (Tyr-196). Lys-209 carries the N6-acetyllysine modification. A helical membrane pass occupies residues 219 to 238; sequence GVAPLWMRQIPYTMMKFACF. The Mitochondrial intermembrane portion of the chain corresponds to 239–261; that stretch reads ERTVEALYKFVVPKPRSECSKPE. Residues 262-284 traverse the membrane as a helical segment; the sequence is QLVVTFVAGYIAGVFCAIVSHPA. Topologically, residues 285-314 are mitochondrial matrix; sequence DSVVSVLNKEKGSSASEVLKRLGFRGVWKG. A helical transmembrane segment spans residues 315 to 333; it reads LFARIIMIGTLTALQWFIY. Residues 334–362 lie on the Mitochondrial intermembrane side of the membrane; the sequence is DSVKVYFRLPRPPPPEMPESLKKKLGYTQ.

This sequence belongs to the mitochondrial carrier (TC 2.A.29) family. In terms of assembly, interacts with PPIF; the interaction is impaired by CsA. As to expression, expressed in heart, diaphragm and skeletal muscle (at protein level). Not detected in liver, lung, brain, and kidney (at protein level). In terms of tissue distribution, ubiquitous (at protein level).

It is found in the mitochondrion inner membrane. It carries out the reaction phosphate(in) + H(+)(in) = phosphate(out) + H(+)(out). Its activity is regulated as follows. Up-regulated in the presence of cardiolipin. Functionally, inorganic ion transporter that transports phosphate or copper ions across the mitochondrial inner membrane into the matrix compartment. Mediates proton-coupled symport of phosphate ions necessary for mitochondrial oxidative phosphorylation of ADP to ATP. Transports copper ions probably in the form of anionic copper(I) complexes to maintain mitochondrial matrix copper pool and to supply copper for cytochrome C oxidase complex assembly. May also play a role in regulation of the mitochondrial permeability transition pore (mPTP). The protein is Solute carrier family 25 member 3 of Bos taurus (Bovine).